The primary structure comprises 274 residues: DNA-directed RNA polymerase subunit Rpo3 (274 aa).

Positions 202, 205, and 208 each coordinate [3Fe-4S] cluster.

The protein belongs to the archaeal Rpo3/eukaryotic RPB3 RNA polymerase subunit family. In terms of assembly, part of the RNA polymerase complex. It depends on [3Fe-4S] cluster as a cofactor.

Its subcellular location is the cytoplasm. The enzyme catalyses RNA(n) + a ribonucleoside 5'-triphosphate = RNA(n+1) + diphosphate. DNA-dependent RNA polymerase (RNAP) catalyzes the transcription of DNA into RNA using the four ribonucleoside triphosphates as substrates. This Methanobrevibacter smithii (strain ATCC 35061 / DSM 861 / OCM 144 / PS) protein is DNA-directed RNA polymerase subunit Rpo3.